We begin with the raw amino-acid sequence, 669 residues long: RNA-binding protein 14 (669 aa).

2 consecutive RRM domains span residues 1 to 73 (MKIF…MSRP) and 79 to 149 (WKIF…LSTK). Glycyl lysine isopeptide (Lys-Gly) (interchain with G-Cter in SUMO2) cross-links involve residues Lys126, Lys135, Lys138, Lys149, and Lys153. Disordered stretches follow at residues 148-175 (TKGQ…DTAF) and 193-232 (NSTG…PLTA). Position 161 is a phosphoserine (Ser161). Position 164 is an N6-acetyllysine; alternate (Lys164). Lys164 is covalently cross-linked (Glycyl lysine isopeptide (Lys-Gly) (interchain with G-Cter in SUMO2); alternate). Phosphothreonine is present on Thr206. A phosphoserine mark is found at Ser220, Ser242, Ser244, Ser256, Ser272, and Ser280. The disordered stretch occupies residues 284-303 (PYRGQLASPSSQSAAASSLG). Over residues 287–303 (GQLASPSSQSAAASSLG) the composition is skewed to low complexity. Positions 307-354 (GAQPSASALSSYGGQPAAASSLNSYGAQGSSLASYGNQPSSYGAQAAS) are TRBP-interacting domain; interaction with STIL. Phosphoserine is present on residues Ser520, Ser523, Ser527, and Ser562. Residues 569–590 (ANSTPPPYERTRLSPPRASYDD) form a disordered region. Thr572 carries the post-translational modification Phosphothreonine. Ser582 is modified (phosphoserine). A Glycyl lysine isopeptide (Lys-Gly) (interchain with G-Cter in SUMO2) cross-link involves residue Lys600. Phosphoserine occurs at positions 618, 620, 623, 627, 643, and 649.

As to quaternary structure, interacts with NCOA6, CITED1 and XRCC5/KU86. Interacts with SS18. Interacts with STIL and interferes with its interaction with CPAP. Interacts with gamma-tubulin. Part of the HDP-RNP complex composed of at least HEXIM1, PRKDC, XRCC5, XRCC6, paraspeckle proteins (SFPQ, NONO, PSPC1, RBM14, and MATR3) and NEAT1 RNA.

It is found in the nucleus. Its subcellular location is the nucleolus. The protein resides in the cytoplasm. May function as a nuclear receptor coactivator, enhancing transcription through other coactivators such as NCOA6 and CITED1. Regulates centriole biogenesis by suppressing the formation of aberrant centriolar protein complexes in the cytoplasm and thus preserving mitotic spindle integrity. Prevents the formation of the STIL-CPAP complex (which can induce the formation of aberrant centriolar protein complexes) by interfering with the interaction of STIL with CPAP. Plays a role in the regulation of DNA virus-mediated innate immune response by assembling into the HDP-RNP complex, a complex that serves as a platform for IRF3 phosphorylation and subsequent innate immune response activation through the cGAS-STING pathway. The protein is RNA-binding protein 14 (RBM14) of Bos taurus (Bovine).